A 102-amino-acid polypeptide reads, in one-letter code: Small ribosomal subunit protein uS14 (102 aa).

It belongs to the universal ribosomal protein uS14 family. In terms of assembly, part of the 30S ribosomal subunit. Contacts proteins S3 and S10.

Binds 16S rRNA, required for the assembly of 30S particles and may also be responsible for determining the conformation of the 16S rRNA at the A site. This chain is Small ribosomal subunit protein uS14, found in Ehrlichia ruminantium (strain Gardel).